A 486-amino-acid chain; its full sequence is Membrane-bound lytic murein transglycosylase F (486 aa).

The N-terminal stretch at 1–21 is a signal peptide; sequence MKRLKINYILIGVVTLLLALA. The interval 22–268 is non-LT domain; that stretch reads LWPNITWRGG…RLEEKYLGHV (247 aa). The segment at 269-486 is LT domain; the sequence is GSFDYVDTKT…AVTPELALNF (218 aa). E313 is an active-site residue.

In the N-terminal section; belongs to the bacterial solute-binding protein 3 family. The protein in the C-terminal section; belongs to the transglycosylase Slt family.

Its subcellular location is the cell outer membrane. It carries out the reaction Exolytic cleavage of the (1-&gt;4)-beta-glycosidic linkage between N-acetylmuramic acid (MurNAc) and N-acetylglucosamine (GlcNAc) residues in peptidoglycan, from either the reducing or the non-reducing ends of the peptidoglycan chains, with concomitant formation of a 1,6-anhydrobond in the MurNAc residue.. Functionally, murein-degrading enzyme that degrades murein glycan strands and insoluble, high-molecular weight murein sacculi, with the concomitant formation of a 1,6-anhydromuramoyl product. Lytic transglycosylases (LTs) play an integral role in the metabolism of the peptidoglycan (PG) sacculus. Their lytic action creates space within the PG sacculus to allow for its expansion as well as for the insertion of various structures such as secretion systems and flagella. The sequence is that of Membrane-bound lytic murein transglycosylase F from Serratia proteamaculans (strain 568).